The following is a 593-amino-acid chain: Methionine--tRNA ligase (593 aa).

Residues 7–17 carry the 'HIGH' region motif; sequence PYANGPRHIGH. Positions 139, 142, 152, and 155 each coordinate Zn(2+). The short motif at 343–347 is the 'KMSKS' region element; that stretch reads KFSTS. Position 346 (Thr346) interacts with ATP.

Belongs to the class-I aminoacyl-tRNA synthetase family. MetG type 1 subfamily. In terms of assembly, monomer. It depends on Zn(2+) as a cofactor.

The protein localises to the cytoplasm. The catalysed reaction is tRNA(Met) + L-methionine + ATP = L-methionyl-tRNA(Met) + AMP + diphosphate. In terms of biological role, is required not only for elongation of protein synthesis but also for the initiation of all mRNA translation through initiator tRNA(fMet) aminoacylation. The sequence is that of Methionine--tRNA ligase from Saccharopolyspora erythraea (strain ATCC 11635 / DSM 40517 / JCM 4748 / NBRC 13426 / NCIMB 8594 / NRRL 2338).